Reading from the N-terminus, the 475-residue chain is UDP-N-acetylmuramate--L-alanine ligase (475 aa).

118–124 (GTHGKTT) provides a ligand contact to ATP.

It belongs to the MurCDEF family.

The protein resides in the cytoplasm. The enzyme catalyses UDP-N-acetyl-alpha-D-muramate + L-alanine + ATP = UDP-N-acetyl-alpha-D-muramoyl-L-alanine + ADP + phosphate + H(+). It functions in the pathway cell wall biogenesis; peptidoglycan biosynthesis. Functionally, cell wall formation. This Paracoccus denitrificans (strain Pd 1222) protein is UDP-N-acetylmuramate--L-alanine ligase.